An 814-amino-acid chain; its full sequence is Protein kintoun (814 aa).

Over residues 234 to 246 (AANTARSPASPAP) the composition is skewed to low complexity. Disordered regions lie at residues 234 to 259 (AANTARSPASPAPEAVQRPEPTEPRC) and 357 to 490 (ARQE…MGDP). Basic and acidic residues predominate over residues 388–404 (AAREESADGTGADHGEK). Phosphoserine occurs at positions 444 and 618. The interval 654–686 (AGLQGKGKGVREGCPLSEAEAADQSATSPAASD) is disordered. A compositionally biased stretch (low complexity) spans 675-686 (ADQSATSPAASD).

The protein belongs to the PIH1 family. Kintoun subfamily. Interacts with DNAI2 and HSPA1A. Interacts with CFAP300. Interacts with DNAAF4. Interacts with DNAAF6/PIH1D3. Expressed in nearly all organs of adult, with higher expression in tissues known to have motile cilia and flagella, such as brain and testis.

The protein resides in the cytoplasm. The protein localises to the dynein axonemal particle. In terms of biological role, required for cytoplasmic pre-assembly of axonemal dyneins, thereby playing a central role in motility in cilia and flagella. Involved in pre-assembly of dynein arm complexes in the cytoplasm before intraflagellar transport loads them for the ciliary compartment. The protein is Protein kintoun of Mus musculus (Mouse).